We begin with the raw amino-acid sequence, 140 residues long: ATP synthase epsilon chain (140 aa).

This sequence belongs to the ATPase epsilon chain family. As to quaternary structure, F-type ATPases have 2 components, CF(1) - the catalytic core - and CF(0) - the membrane proton channel. CF(1) has five subunits: alpha(3), beta(3), gamma(1), delta(1), epsilon(1). CF(0) has three main subunits: a, b and c.

The protein resides in the cell inner membrane. Produces ATP from ADP in the presence of a proton gradient across the membrane. This Pseudoalteromonas translucida (strain TAC 125) protein is ATP synthase epsilon chain.